We begin with the raw amino-acid sequence, 154 residues long: Prefoldin subunit 2 (154 aa).

2 disordered regions span residues 1-20 and 126-154; these read MADS…GKGA and LMGE…VLVS. Residues 9–18 show a composition bias toward gly residues; sequence GKSGGSGAGK. Residues 126–139 are compositionally biased toward basic and acidic residues; sequence LMGEDEKPAAKENS. Low complexity predominate over residues 140-154; it reads EGAGAKASSAGVLVS.

It belongs to the prefoldin subunit beta family. As to quaternary structure, heterohexamer of two PFD-alpha type and four PFD-beta type subunits. Component of the PAQosome complex which is responsible for the biogenesis of several protein complexes and which consists of R2TP complex members RUVBL1, RUVBL2, RPAP3 and PIH1D1, URI complex members PFDN2, PFDN6, PDRG1, UXT and URI1 as well as ASDURF, POLR2E and DNAAF10/WDR92. Interacts with URI1; the interaction is phosphorylation-dependent and occurs in a growth-dependent manner.

The protein resides in the nucleus. It is found in the cytoplasm. The protein localises to the mitochondrion. Functionally, binds specifically to cytosolic chaperonin (c-CPN) and transfers target proteins to it. Binds to nascent polypeptide chain and promotes folding in an environment in which there are many competing pathways for nonnative proteins. The chain is Prefoldin subunit 2 (Pfdn2) from Mus musculus (Mouse).